The primary structure comprises 519 residues: (3S,6E)-nerolidol synthase 1 (519 aa).

5 residues coordinate Mg(2+): aspartate 273, aspartate 277, aspartate 417, serine 421, and glutamate 425. The short motif at 273–277 (DDIFD) is the DDXXD motif element.

It belongs to the terpene synthase family. Tpsg subfamily. It depends on Mg(2+) as a cofactor. Requires Mn(2+) as cofactor. Expressed in receptacle tissue. Not detected in leaves or green fruit.

Its subcellular location is the cytoplasm. The protein resides in the cytosol. It catalyses the reaction (2E,6E)-farnesyl diphosphate + H2O = (3S,6E)-nerolidol + diphosphate. It participates in secondary metabolite biosynthesis; terpenoid biosynthesis. In terms of biological role, involved in monoterpene (C10) and sesquiterpene (C15) biosynthesis. Converts geranyl diphosphate (GPP) into S-linalool and farnesyl diphosphate (FPP) into (3S)-E-nerolidol. Exclusively present and highly expressed in the fruit of cultivated (octaploid) varieties. The chain is (3S,6E)-nerolidol synthase 1 from Fragaria ananassa (Strawberry).